A 583-amino-acid chain; its full sequence is Torsin-1A-interacting protein 1 (583 aa).

A compositionally biased stretch (basic and acidic residues) spans 1–12 (MAGDGRRAEAVR). Disordered stretches follow at residues 1–254 (MAGD…RSSS) and 271–293 (AHDK…WAPQ). Residues 1-338 (MAGDGRRAEA…NASFVKRNRW (338 aa)) lie on the Nuclear side of the membrane. S60 bears the Phosphoserine mark. Composition is skewed to basic and acidic residues over residues 74–101 (VAKE…EVRE) and 115–124 (RPQETEEMKT). Phosphoserine occurs at positions 135 and 143. M146 is modified (methionine sulfoxide). 3 positions are modified to phosphoserine: S154, S156, and S157. Over residues 165–174 (QTDLSQTISK) the composition is skewed to polar residues. S186 and S215 each carry phosphoserine. The segment covering 216–225 (EEGETEEDDQ) has biased composition (acidic residues). Residue T220 is modified to Phosphothreonine. Phosphoserine occurs at positions 227, 230, and 242. Basic and acidic residues predominate over residues 238 to 250 (RSRDSDESGDKTT). Positions 277–287 (SVLSSGYQKTP) are enriched in polar residues. M301 carries the post-translational modification Methionine sulfoxide. S305 carries the post-translational modification Phosphoserine. K308 participates in a covalent cross-link: Glycyl lysine isopeptide (Lys-Gly) (interchain with G-Cter in SUMO2). Phosphoserine occurs at positions 309 and 315. Positions 309 to 328 (SELGNQSPSTSSRQVTGQPQ) are disordered. The helical transmembrane segment at 339 to 355 (WLLPLIAALASGSFWFF) threads the bilayer. At 356-583 (STPEVETTAV…ENALKRGICL (228 aa)) the chain is on the perinuclear space side. The interval 356-583 (STPEVETTAV…ENALKRGICL (228 aa)) is interaction with TOR1A. Positions 359–435 (EVETTAVQEF…SEQIADAYSS (77 aa)) form a coiled coil. The N-linked (GlcNAc...) asparagine glycan is linked to N399. M552 carries the methionine sulfoxide modification.

This sequence belongs to the TOR1AIP family. In terms of assembly, interacts with ATP1B4. Interacts with TOR1A (ATP-bound). Interacts with TOR1B, TOR2A and TOR3A. Interacts with VIM. In terms of processing, phosphorylated. Dephosphorylated at Ser-309 and Ser-315 by serine/threonine-protein phosphatase PP1. In terms of tissue distribution, expressed in muscle, liver and kidney. As to expression, major isoform present in liver, brain and heart (at protein level). Expressed at lower levels than isoform 4 in lung, kidney and spleen (at protein level). Similar levels of isoforms 1 and 4 are observed in ovary, testis and pancreas (at protein level). Expressed at higher levels than isoform 1 in lung, kidney and spleen (at protein level). Expressed at lower levels than isoform 1 in liver, brain and heart (at protein level). Similar levels of isoforms 1 and 4 are observed in ovary, testis and pancreas (at protein level).

The protein resides in the nucleus inner membrane. The protein localises to the nucleus envelope. Its subcellular location is the nucleus. Its function is as follows. Required for nuclear membrane integrity. Induces TOR1A and TOR1B ATPase activity and is required for their location on the nuclear membrane. Binds to A- and B-type lamins. Possible role in membrane attachment and assembly of the nuclear lamina. This is Torsin-1A-interacting protein 1 (TOR1AIP1) from Homo sapiens (Human).